Reading from the N-terminus, the 491-residue chain is Probable CtpA-like serine protease (491 aa).

Residues 1–22 (MNDHQKNHATSQDDNTKSTPSK) form a disordered region. Polar residues predominate over residues 8–22 (HATSQDDNTKSTPSK). The helical transmembrane segment at 31-51 (LWHFILVILGIILLTSIITVV) threads the bilayer. The PDZ domain maps to 119 to 201 (TKQFNEGVSG…TYVTLTIKRG (83 aa)). Active-site charge relay system residues include S324, D335, and K349.

This sequence belongs to the peptidase S41A family.

It is found in the cell membrane. This is Probable CtpA-like serine protease from Staphylococcus epidermidis (strain ATCC 35984 / DSM 28319 / BCRC 17069 / CCUG 31568 / BM 3577 / RP62A).